The following is a 1010-amino-acid chain: Trifunctional purine biosynthetic protein adenosine-3 (1010 aa).

The residue at position 2 (Ala-2) is an N-acetylalanine. The 208-residue stretch at 111-318 (KEFMDRHGIS…LYEVIQSILD (208 aa)) folds into the ATP-grasp domain. Residues 190 to 193 (EELL), Glu-197, Arg-220, and Asn-229 contribute to the ATP site. Mg(2+)-binding residues include Glu-288 and Asn-290. Residue Lys-350 is modified to N6-acetyllysine. The tract at residues 434–809 (GLTYKESGVD…HFSVQPKKAR (376 aa)) is AIRS domain. Residue Ser-440 is modified to Phosphoserine. A Phosphothreonine modification is found at Thr-682. Ser-802 bears the Phosphoserine mark. The segment at 810–1010 (VAVLISGTGS…NGRICWVTED (201 aa)) is GART domain. 818–820 (GSN) contacts N(1)-(5-phospho-beta-D-ribosyl)glycinamide. (6R)-10-formyltetrahydrofolate contacts are provided by residues Arg-871, 896–899 (MRIL), and Asn-913. The Proton donor role is filled by His-915. Residue 947–951 (AEDVD) participates in (6R)-10-formyltetrahydrofolate binding. A N(1)-(5-phospho-beta-D-ribosyl)glycinamide-binding site is contributed by 977–980 (KLAE).

This sequence in the N-terminal section; belongs to the GARS family. In the central section; belongs to the AIR synthase family. The protein in the C-terminal section; belongs to the GART family. Homodimer. Mg(2+) is required as a cofactor. It depends on Mn(2+) as a cofactor.

The enzyme catalyses 5-phospho-beta-D-ribosylamine + glycine + ATP = N(1)-(5-phospho-beta-D-ribosyl)glycinamide + ADP + phosphate + H(+). It carries out the reaction 2-formamido-N(1)-(5-O-phospho-beta-D-ribosyl)acetamidine + ATP = 5-amino-1-(5-phospho-beta-D-ribosyl)imidazole + ADP + phosphate + H(+). The catalysed reaction is N(1)-(5-phospho-beta-D-ribosyl)glycinamide + (6R)-10-formyltetrahydrofolate = N(2)-formyl-N(1)-(5-phospho-beta-D-ribosyl)glycinamide + (6S)-5,6,7,8-tetrahydrofolate + H(+). It functions in the pathway purine metabolism; IMP biosynthesis via de novo pathway; 5-amino-1-(5-phospho-D-ribosyl)imidazole from N(2)-formyl-N(1)-(5-phospho-D-ribosyl)glycinamide: step 2/2. It participates in purine metabolism; IMP biosynthesis via de novo pathway; N(1)-(5-phospho-D-ribosyl)glycinamide from 5-phospho-alpha-D-ribose 1-diphosphate: step 2/2. The protein operates within purine metabolism; IMP biosynthesis via de novo pathway; N(2)-formyl-N(1)-(5-phospho-D-ribosyl)glycinamide from N(1)-(5-phospho-D-ribosyl)glycinamide (10-formyl THF route): step 1/1. Its function is as follows. Trifunctional enzyme that catalyzes three distinct reactions as part of the 'de novo' inosine monophosphate biosynthetic pathway. The polypeptide is Trifunctional purine biosynthetic protein adenosine-3 (GART) (Bos taurus (Bovine)).